The chain runs to 411 residues: Phosphopentomutase (411 aa).

Residues Asp14, Asp306, His311, Asp347, His348, and His359 each coordinate Mn(2+).

This sequence belongs to the phosphopentomutase family. It depends on Mn(2+) as a cofactor.

It is found in the cytoplasm. It catalyses the reaction 2-deoxy-alpha-D-ribose 1-phosphate = 2-deoxy-D-ribose 5-phosphate. It carries out the reaction alpha-D-ribose 1-phosphate = D-ribose 5-phosphate. It participates in carbohydrate degradation; 2-deoxy-D-ribose 1-phosphate degradation; D-glyceraldehyde 3-phosphate and acetaldehyde from 2-deoxy-alpha-D-ribose 1-phosphate: step 1/2. Its function is as follows. Isomerase that catalyzes the conversion of deoxy-ribose 1-phosphate (dRib-1-P) and ribose 1-phosphate (Rib-1-P) to deoxy-ribose 5-phosphate (dRib-5-P) and ribose 5-phosphate (Rib-5-P), respectively. This chain is Phosphopentomutase, found in Lactococcus lactis subsp. lactis (strain IL1403) (Streptococcus lactis).